A 449-amino-acid chain; its full sequence is Xylose isomerase (449 aa).

Residues H101 and D104 contribute to the active site. E232, E268, H271, D296, D307, D309, and D340 together coordinate Mg(2+).

Belongs to the xylose isomerase family. As to quaternary structure, homotetramer. Requires Mg(2+) as cofactor.

It localises to the cytoplasm. The catalysed reaction is alpha-D-xylose = alpha-D-xylulofuranose. The polypeptide is Xylose isomerase (Bifidobacterium longum (strain NCC 2705)).